Reading from the N-terminus, the 935-residue chain is Protein translocase subunit SecA (935 aa).

Residues glutamine 90, 108-112 (GEGKT), and aspartate 504 contribute to the ATP site. The tract at residues 543-568 (GGRRPQGFGTSKKKGKNWSPSDADIF) is disordered.

This sequence belongs to the SecA family. Monomer and homodimer. Part of the essential Sec protein translocation apparatus which comprises SecA, SecYEG and auxiliary proteins SecDF. Other proteins may also be involved.

The protein localises to the cell inner membrane. It is found in the cellular thylakoid membrane. It localises to the cytoplasm. It catalyses the reaction ATP + H2O + cellular proteinSide 1 = ADP + phosphate + cellular proteinSide 2.. Its function is as follows. Part of the Sec protein translocase complex. Interacts with the SecYEG preprotein conducting channel. Has a central role in coupling the hydrolysis of ATP to the transfer of proteins into and across the cell membrane, serving as an ATP-driven molecular motor driving the stepwise translocation of polypeptide chains across the membrane. Probably participates in protein translocation into and across both the cytoplasmic and thylakoid membranes in cyanobacterial cells. The protein is Protein translocase subunit SecA of Rippkaea orientalis (strain PCC 8801 / RF-1) (Cyanothece sp. (strain PCC 8801)).